Reading from the N-terminus, the 1089-residue chain is GPI ethanolamine phosphate transferase 3, catalytic subunit (1089 aa).

Residues 4-24 (ASVLLFLAWVCFLFYAGIALF) traverse the membrane as a helical segment. Residue Asn268 is glycosylated (N-linked (GlcNAc...) asparagine). Helical transmembrane passes span 457-477 (LLAA…SPGF), 482-502 (LLLT…GLLG), 510-530 (LVLL…WKAW), 541-561 (TLFP…AVFF), 575-595 (FLLG…GQLL), 668-688 (LWYG…RLWL), 701-721 (MLFV…YWAL), 747-767 (VAGL…TVLV), 830-850 (SVYS…LLLL), 857-877 (LVFL…AAGI), 944-964 (FASH…PFLC), 1014-1034 (LKYL…ASIL), and 1048-1068 (FIFE…GIAL).

Belongs to the PIGG/PIGN/PIGO family. PIGO subfamily. In terms of assembly, part of the ethanolamine phosphate transferase 3 complex composed by PIGO and PIGF. PIGF is required to stabilize PIGO.

The protein localises to the endoplasmic reticulum membrane. It functions in the pathway glycolipid biosynthesis; glycosylphosphatidylinositol-anchor biosynthesis. In terms of biological role, catalytic subunit of the ethanolamine phosphate transferase 3 complex that transfers an ethanolamine phosphate (EtNP) from a phosphatidylethanolamine (PE) to the 6-OH position of the third alpha-1,2-linked mannose of an alpha-D-Man-(1-&gt;2)-alpha-D-Man-(1-&gt;6)-2-PEtn-alpha-D-Man-(1-&gt;4)-alpha-D-GlcN-(1-&gt;6)-(1-radyl,2-acyl-sn-glycero-3-phospho)-2-acyl-inositol (also termed H6) intermediate to generate a 6-PEtn-alpha-D-Man-(1-&gt;2)-alpha-D-Man-(1-&gt;6)-2-PEtn-alpha-D-Man-(1-&gt;4)-alpha-D-GlcN-(1-&gt;6)-(1-radyl,2-acyl-sn-glycero-3-phospho)-2-acyl-inositol (also termed H7) and participates in the tenth step of the glycosylphosphatidylinositol-anchor biosynthesis. The protein is GPI ethanolamine phosphate transferase 3, catalytic subunit of Homo sapiens (Human).